A 460-amino-acid chain; its full sequence is Inactive 7-epi-sesquithujene synthase (460 aa).

Residues D308 and D312 each coordinate Mg(2+). The substrate site is built by D308 and D312. The short motif at 308-312 (DDMFD) is the DDXXD motif element.

Belongs to the terpene synthase family. Monomer. Mg(2+) serves as cofactor. The cofactor is Mn(2+).

The protein localises to the cytoplasm. Its pathway is secondary metabolite biosynthesis; terpenoid biosynthesis. Non-functional sesquiterpene synthase due to a frameshift removing part of the catalytic site. This is Inactive 7-epi-sesquithujene synthase from Zea mays (Maize).